The sequence spans 488 residues: Probable Xaa-Pro aminopeptidase ATEG_00858 (488 aa).

The Mn(2+) site is built by Asp-273, Asp-284, Glu-417, and Glu-456.

Belongs to the peptidase M24B family. Mn(2+) serves as cofactor.

The catalysed reaction is Release of any N-terminal amino acid, including proline, that is linked to proline, even from a dipeptide or tripeptide.. In terms of biological role, catalyzes the removal of a penultimate prolyl residue from the N-termini of peptides. In Aspergillus terreus (strain NIH 2624 / FGSC A1156), this protein is Probable Xaa-Pro aminopeptidase ATEG_00858.